The primary structure comprises 365 residues: DNA replication and repair protein RecF (365 aa).

ATP is bound at residue 30 to 37 (GQNGSGKT).

Belongs to the RecF family.

It localises to the cytoplasm. Functionally, the RecF protein is involved in DNA metabolism; it is required for DNA replication and normal SOS inducibility. RecF binds preferentially to single-stranded, linear DNA. It also seems to bind ATP. The chain is DNA replication and repair protein RecF from Shewanella halifaxensis (strain HAW-EB4).